The chain runs to 29 residues: Mycofactocin precursor peptide (29 aa).

This sequence belongs to the mycofactocin precursor peptide family. The post-translational modifications that lead to mycofactocin involve oxidative decarboxylation of the C-terminal tyrosine residue catalyzed by MftC, introduction of a tyramine-valine cross-link, removal of the modified C-terminal dipeptide by MftE. The released dipeptide then undergoes oxidative deamination by MftD, glycosylation by MftF and methylation by an unknown enzyme.

Precursor peptide that leads to mycofactocin (MFT) after extensive post-translational modifications by enzymes encoded by adjacent genes. Mycofactocin acts as a redox cofactor of nicotinamide-dependent oxidoreductases encoded in the same locus. The chain is Mycofactocin precursor peptide from Mycobacterium tuberculosis (strain ATCC 25618 / H37Rv).